The chain runs to 414 residues: Serine/threonine transporter SstT (414 aa).

8 helical membrane passes run 16–36 (GSLV…AWIS), 46–66 (LGTL…LMLV), 84–104 (ILFL…VFSF), 143–163 (ALLN…GFAL), 180–200 (AVTF…FGLV), 219–239 (LVVL…LLVF), 300–320 (MAGA…TLGV), and 332–352 (VVAS…LLLI).

The protein belongs to the dicarboxylate/amino acid:cation symporter (DAACS) (TC 2.A.23) family.

The protein localises to the cell inner membrane. It carries out the reaction L-serine(in) + Na(+)(in) = L-serine(out) + Na(+)(out). The enzyme catalyses L-threonine(in) + Na(+)(in) = L-threonine(out) + Na(+)(out). Its function is as follows. Involved in the import of serine and threonine into the cell, with the concomitant import of sodium (symport system). The sequence is that of Serine/threonine transporter SstT from Salmonella schwarzengrund (strain CVM19633).